The following is a 581-amino-acid chain: uncharacterized protein (581 aa).

12 helical membrane-spanning segments follow: residues 84–104, 109–129, 149–169, 187–207, 216–236, 266–286, 304–324, 348–368, 399–419, 432–452, 485–505, and 514–534; these read MISV…SAFA, ASVI…IYAL, FIDP…YFVT, INSA…NLFG, FILS…AIII, FCSV…IGLA, VFWR…LLVS, ANIK…VVSV, VGRP…AYIN, VFDW…GSIC, IGLG…LFLI, and FFQG…YKIY.

The protein belongs to the amino acid-polyamine-organocation (APC) superfamily.

It is found in the membrane. This is an uncharacterized protein from Schizosaccharomyces pombe (strain 972 / ATCC 24843) (Fission yeast).